The sequence spans 243 residues: 5'-methylthioadenosine/S-adenosylhomocysteine nucleosidase (243 aa).

The Proton acceptor role is filled by glutamate 12. Substrate is bound by residues glycine 78, methionine 158, and methionine 179 to glutamate 180. Aspartate 203 (proton donor) is an active-site residue.

Belongs to the PNP/UDP phosphorylase family. MtnN subfamily.

It catalyses the reaction S-adenosyl-L-homocysteine + H2O = S-(5-deoxy-D-ribos-5-yl)-L-homocysteine + adenine. It carries out the reaction S-methyl-5'-thioadenosine + H2O = 5-(methylsulfanyl)-D-ribose + adenine. The catalysed reaction is 5'-deoxyadenosine + H2O = 5-deoxy-D-ribose + adenine. Its pathway is amino-acid biosynthesis; L-methionine biosynthesis via salvage pathway; S-methyl-5-thio-alpha-D-ribose 1-phosphate from S-methyl-5'-thioadenosine (hydrolase route): step 1/2. In terms of biological role, catalyzes the irreversible cleavage of the glycosidic bond in both 5'-methylthioadenosine (MTA) and S-adenosylhomocysteine (SAH/AdoHcy) to adenine and the corresponding thioribose, 5'-methylthioribose and S-ribosylhomocysteine, respectively. Also cleaves 5'-deoxyadenosine, a toxic by-product of radical S-adenosylmethionine (SAM) enzymes, into 5-deoxyribose and adenine. This chain is 5'-methylthioadenosine/S-adenosylhomocysteine nucleosidase, found in Colwellia psychrerythraea (strain 34H / ATCC BAA-681) (Vibrio psychroerythus).